Consider the following 240-residue polypeptide: UDP-2,3-diacylglucosamine hydrolase (240 aa).

5 residues coordinate Mn(2+): D8, H10, D41, N78, and H113. A substrate-binding site is contributed by N78–R79. Substrate contacts are provided by D121, S159, N163, K166, and H194. Residues H194 and H196 each coordinate Mn(2+).

It belongs to the LpxH family. It depends on Mn(2+) as a cofactor.

It is found in the cell inner membrane. The catalysed reaction is UDP-2-N,3-O-bis[(3R)-3-hydroxytetradecanoyl]-alpha-D-glucosamine + H2O = 2-N,3-O-bis[(3R)-3-hydroxytetradecanoyl]-alpha-D-glucosaminyl 1-phosphate + UMP + 2 H(+). Its pathway is glycolipid biosynthesis; lipid IV(A) biosynthesis; lipid IV(A) from (3R)-3-hydroxytetradecanoyl-[acyl-carrier-protein] and UDP-N-acetyl-alpha-D-glucosamine: step 4/6. Functionally, hydrolyzes the pyrophosphate bond of UDP-2,3-diacylglucosamine to yield 2,3-diacylglucosamine 1-phosphate (lipid X) and UMP by catalyzing the attack of water at the alpha-P atom. Involved in the biosynthesis of lipid A, a phosphorylated glycolipid that anchors the lipopolysaccharide to the outer membrane of the cell. The chain is UDP-2,3-diacylglucosamine hydrolase from Shewanella baltica (strain OS223).